The following is a 236-amino-acid chain: Purine nucleoside phosphorylase DeoD-type 2 (236 aa).

Position 5 (His-5) interacts with a purine D-ribonucleoside. Residues Gly-21, Arg-25, Arg-44, and 88-91 each bind phosphate; that span reads RIGS. A purine D-ribonucleoside-binding positions include 180–182 and 204–205; these read DME and SD. Asp-205 (proton donor) is an active-site residue.

The protein belongs to the PNP/UDP phosphorylase family. Homohexamer; trimer of homodimers.

It carries out the reaction a purine D-ribonucleoside + phosphate = a purine nucleobase + alpha-D-ribose 1-phosphate. The enzyme catalyses a purine 2'-deoxy-D-ribonucleoside + phosphate = a purine nucleobase + 2-deoxy-alpha-D-ribose 1-phosphate. Its function is as follows. Catalyzes the reversible phosphorolytic breakdown of the N-glycosidic bond in the beta-(deoxy)ribonucleoside molecules, with the formation of the corresponding free purine bases and pentose-1-phosphate. In Vibrio cholerae serotype O1 (strain ATCC 39315 / El Tor Inaba N16961), this protein is Purine nucleoside phosphorylase DeoD-type 2.